A 502-amino-acid polypeptide reads, in one-letter code: Putative ZDHHC-type palmitoyltransferase 3 (502 aa).

Residues Met-1 to Leu-80 form a disordered region. Positions Lys-10 to Glu-30 are enriched in basic and acidic residues. The segment covering Asn-31 to Tyr-52 has biased composition (low complexity). A glycan (N-linked (GlcNAc...) asparagine) is linked at Asn-58. Acidic residues predominate over residues Asp-59–Thr-73. A run of 2 helical transmembrane segments spans residues Phe-104 to Val-124 and Leu-134 to Tyr-154. The interval Ile-200–Gln-281 is disordered. Residues Asp-203–Phe-212 are compositionally biased toward low complexity. Over residues Ser-213–Glu-222 the composition is skewed to acidic residues. Residues Asn-248 to Asn-280 are compositionally biased toward low complexity. 2 N-linked (GlcNAc...) asparagine glycosylation sites follow: Asn-252 and Asn-280. Residues Lys-299 to Thr-349 enclose the DHHC domain. The S-palmitoyl cysteine intermediate role is filled by Cys-329. A helical transmembrane segment spans residues Phe-344–Val-364. Residues Asn-371, Asn-388, and Asn-393 are each glycosylated (N-linked (GlcNAc...) asparagine). Residues Gly-419 to Val-439 traverse the membrane as a helical segment. N-linked (GlcNAc...) asparagine glycosylation is found at Asn-449, Asn-483, and Asn-494.

This sequence belongs to the DHHC palmitoyltransferase family.

The protein resides in the membrane. It catalyses the reaction L-cysteinyl-[protein] + hexadecanoyl-CoA = S-hexadecanoyl-L-cysteinyl-[protein] + CoA. The sequence is that of Putative ZDHHC-type palmitoyltransferase 3 from Dictyostelium discoideum (Social amoeba).